We begin with the raw amino-acid sequence, 156 residues long: Eosinophil cationic-type ribonuclease 3 (156 aa).

An N-terminal signal peptide occupies residues 1–25 (MGPKLLESRLCLLLLLRLVLMLASC). His38 serves as the catalytic Proton acceptor. Residue Asn41 is glycosylated (N-linked (GlcNAc...) asparagine). Cystine bridges form between Cys47–Cys106, Cys61–Cys119, Cys79–Cys134, and Cys86–Cys94. 62–66 (KGLNT) serves as a coordination point for substrate. N-linked (GlcNAc...) asparagine glycans are attached at residues Asn89, Asn96, and Asn107. Residue His151 is the Proton donor of the active site.

It belongs to the pancreatic ribonuclease family.

This is Eosinophil cationic-type ribonuclease 3 (Ear3) from Mus musculus (Mouse).